The chain runs to 440 residues: Asparagine--tRNA ligase (440 aa).

This sequence belongs to the class-II aminoacyl-tRNA synthetase family. Homodimer.

The protein resides in the cytoplasm. The enzyme catalyses tRNA(Asn) + L-asparagine + ATP = L-asparaginyl-tRNA(Asn) + AMP + diphosphate + H(+). The sequence is that of Asparagine--tRNA ligase from Roseiflexus sp. (strain RS-1).